A 298-amino-acid chain; its full sequence is Golgi to ER traffic protein 2 (298 aa).

Over Met1–Leu164 the chain is Cytoplasmic. The interval Ile40 to Ala92 is disordered. Over residues Ser42–Val55 the composition is skewed to low complexity. Basic and acidic residues predominate over residues Leu56–Asp67. The helical transmembrane segment at Trp165–Tyr185 threads the bilayer. At Ile186–Asp211 the chain is on the lumenal side. A helical membrane pass occupies residues Phe212–Phe231. Topologically, residues His232–Glu275 are cytoplasmic. Residues Leu276 to Phe296 form a helical membrane-spanning segment. The Lumenal segment spans residues Ala297–Asn298.

The protein belongs to the GET2 family. Component of the Golgi to ER traffic (GET) complex, which is composed of GET1, GET2 and GET3. Within the complex, GET1 and GET2 form a heterotetramer which is stabilized by phosphatidylinositol binding and which binds to the GET3 homodimer.

The protein resides in the endoplasmic reticulum membrane. It localises to the golgi apparatus membrane. In terms of biological role, required for the post-translational delivery of tail-anchored (TA) proteins to the endoplasmic reticulum. Together with GET1, acts as a membrane receptor for soluble GET3, which recognizes and selectively binds the transmembrane domain of TA proteins in the cytosol. The GET complex cooperates with the HDEL receptor ERD2 to mediate the ATP-dependent retrieval of resident ER proteins that contain a C-terminal H-D-E-L retention signal from the Golgi to the ER. This chain is Golgi to ER traffic protein 2, found in Candida albicans (strain SC5314 / ATCC MYA-2876) (Yeast).